The chain runs to 431 residues: 3-phosphoshikimate 1-carboxyvinyltransferase (431 aa).

3-phosphoshikimate-binding residues include Lys22, Ser23, and Arg27. Lys22 provides a ligand contact to phosphoenolpyruvate. Residues Gly94 and Arg122 each contribute to the phosphoenolpyruvate site. Residues Ser168, Ser169, Gln170, Ser196, Asp315, and Lys342 each contribute to the 3-phosphoshikimate site. Gln170 serves as a coordination point for phosphoenolpyruvate. Catalysis depends on Asp315, which acts as the Proton acceptor. Residues Arg346, Arg390, and Lys414 each coordinate phosphoenolpyruvate.

It belongs to the EPSP synthase family. In terms of assembly, monomer.

Its subcellular location is the cytoplasm. The catalysed reaction is 3-phosphoshikimate + phosphoenolpyruvate = 5-O-(1-carboxyvinyl)-3-phosphoshikimate + phosphate. Its pathway is metabolic intermediate biosynthesis; chorismate biosynthesis; chorismate from D-erythrose 4-phosphate and phosphoenolpyruvate: step 6/7. Its function is as follows. Catalyzes the transfer of the enolpyruvyl moiety of phosphoenolpyruvate (PEP) to the 5-hydroxyl of shikimate-3-phosphate (S3P) to produce enolpyruvyl shikimate-3-phosphate and inorganic phosphate. In Nitrosomonas europaea (strain ATCC 19718 / CIP 103999 / KCTC 2705 / NBRC 14298), this protein is 3-phosphoshikimate 1-carboxyvinyltransferase.